The sequence spans 1107 residues: RNA-dependent RNA polymerase 1 (1107 aa).

The protein belongs to the RdRP family.

It catalyses the reaction RNA(n) + a ribonucleoside 5'-triphosphate = RNA(n+1) + diphosphate. Its function is as follows. RNA-dependent direct polymerase involved in antiviral silencing. Required for the production of some small RNAs (mainly 21 and some 22 nucleotides) derived from the crucifer-infecting tobamovirus (TMV-cg). Required for turnip mosaic virus (TuMV) silencing and accumulation of viral siRNAs. Involved in cucumber mosaic virus (CMV) silencing. Required for the biogenesis of viral secondary siRNAs, process that follows the production of primary siRNAs derived from viral RNA replication. Specifically targets the positive-strand of the 3 RNA genomes of CMV and preferentially amplifies the 5'-terminal siRNAs of each viral genomic RNA. Not involved in the production of siRNAs derived from a single-stranded 336-nucleotide satellite RNA of CMV. The protein is RNA-dependent RNA polymerase 1 (RDR1) of Arabidopsis thaliana (Mouse-ear cress).